A 252-amino-acid chain; its full sequence is Curing of [URE3] protein 1 (252 aa).

The protein localises to the nucleus. Its function is as follows. Involved in the curing of prion [URE3]. Nuclear localization of this protein may suggest a role in transcription regulation, so it might exert an effect on [URE3] through known prion-curing chaperones or BTN2. This is Curing of [URE3] protein 1 (CUR1) from Saccharomyces cerevisiae (strain ATCC 204508 / S288c) (Baker's yeast).